The sequence spans 249 residues: tRNA (guanine-N(1)-)-methyltransferase (249 aa).

Residues G113 and 133 to 138 (IGDFVL) each bind S-adenosyl-L-methionine.

The protein belongs to the RNA methyltransferase TrmD family. As to quaternary structure, homodimer.

It is found in the cytoplasm. It catalyses the reaction guanosine(37) in tRNA + S-adenosyl-L-methionine = N(1)-methylguanosine(37) in tRNA + S-adenosyl-L-homocysteine + H(+). Its function is as follows. Specifically methylates guanosine-37 in various tRNAs. This chain is tRNA (guanine-N(1)-)-methyltransferase, found in Photobacterium profundum (strain SS9).